The following is a 90-amino-acid chain: Putative septation protein SpoVG (90 aa).

It belongs to the SpoVG family.

Its function is as follows. Could be involved in septation. The protein is Putative septation protein SpoVG of Clostridium perfringens (strain SM101 / Type A).